A 355-amino-acid chain; its full sequence is Probable nitronate monooxygenase (355 aa).

FMN contacts are provided by residues Asn-71, Gln-175, Gly-180, Gly-218, and 237 to 240 (QMGT).

Belongs to the nitronate monooxygenase family. NMO class I subfamily. FMN is required as a cofactor.

It catalyses the reaction 3 propionate 3-nitronate + 3 O2 + H2O = 3 3-oxopropanoate + 2 nitrate + nitrite + H2O2 + 3 H(+). Functionally, nitronate monooxygenase that uses molecular oxygen to catalyze the oxidative denitrification of alkyl nitronates. Acts on propionate 3-nitronate (P3N), the presumed physiological substrate. Probably functions in the detoxification of P3N, a metabolic poison produced by plants and fungi as a defense mechanism. The protein is Probable nitronate monooxygenase of Staphylococcus aureus (strain MSSA476).